Here is a 122-residue protein sequence, read N- to C-terminus: UPF0102 protein DIP1513 (122 aa).

Belongs to the UPF0102 family.

This chain is UPF0102 protein DIP1513, found in Corynebacterium diphtheriae (strain ATCC 700971 / NCTC 13129 / Biotype gravis).